A 211-amino-acid polypeptide reads, in one-letter code: tRNA (guanine-N(7)-)-methyltransferase (211 aa).

S-adenosyl-L-methionine-binding residues include glutamate 44, aspartate 69, aspartate 96, and aspartate 118. Aspartate 118 is an active-site residue. Lysine 122 contacts substrate. The tract at residues 124 to 129 (KHEKRR) is interaction with RNA. Substrate-binding positions include aspartate 154 and 191 to 194 (TEYE).

This sequence belongs to the class I-like SAM-binding methyltransferase superfamily. TrmB family.

The enzyme catalyses guanosine(46) in tRNA + S-adenosyl-L-methionine = N(7)-methylguanosine(46) in tRNA + S-adenosyl-L-homocysteine. It participates in tRNA modification; N(7)-methylguanine-tRNA biosynthesis. Catalyzes the formation of N(7)-methylguanine at position 46 (m7G46) in tRNA. This Streptococcus pyogenes serotype M12 (strain MGAS2096) protein is tRNA (guanine-N(7)-)-methyltransferase.